Reading from the N-terminus, the 380-residue chain is Alanine racemase (380 aa).

Catalysis depends on Lys39, which acts as the Proton acceptor; specific for D-alanine. An N6-(pyridoxal phosphate)lysine modification is found at Lys39. Arg137 serves as a coordination point for substrate. Tyr263 acts as the Proton acceptor; specific for L-alanine in catalysis. Met310 lines the substrate pocket.

This sequence belongs to the alanine racemase family. Pyridoxal 5'-phosphate is required as a cofactor.

It catalyses the reaction L-alanine = D-alanine. Its pathway is amino-acid biosynthesis; D-alanine biosynthesis; D-alanine from L-alanine: step 1/1. Catalyzes the interconversion of L-alanine and D-alanine. May also act on other amino acids. The protein is Alanine racemase (alr) of Macrococcus caseolyticus (strain JCSC5402) (Macrococcoides caseolyticum).